The primary structure comprises 254 residues: Leucyl/phenylalanyl-tRNA--protein transferase (254 aa).

This sequence belongs to the L/F-transferase family.

The protein localises to the cytoplasm. The enzyme catalyses N-terminal L-lysyl-[protein] + L-leucyl-tRNA(Leu) = N-terminal L-leucyl-L-lysyl-[protein] + tRNA(Leu) + H(+). It catalyses the reaction N-terminal L-arginyl-[protein] + L-leucyl-tRNA(Leu) = N-terminal L-leucyl-L-arginyl-[protein] + tRNA(Leu) + H(+). The catalysed reaction is L-phenylalanyl-tRNA(Phe) + an N-terminal L-alpha-aminoacyl-[protein] = an N-terminal L-phenylalanyl-L-alpha-aminoacyl-[protein] + tRNA(Phe). Functions in the N-end rule pathway of protein degradation where it conjugates Leu, Phe and, less efficiently, Met from aminoacyl-tRNAs to the N-termini of proteins containing an N-terminal arginine or lysine. This Burkholderia vietnamiensis (strain G4 / LMG 22486) (Burkholderia cepacia (strain R1808)) protein is Leucyl/phenylalanyl-tRNA--protein transferase.